The sequence spans 154 residues: Large-conductance mechanosensitive channel (154 aa).

A run of 2 helical transmembrane segments spans residues 12-32 and 71-91; these read GNIV…ALIT and IVLS…FLVV. The interval 129-154 is disordered; the sequence is NGAPSGRHVDTADLTPTPNHEPRADT.

The protein belongs to the MscL family. Homopentamer.

The protein resides in the cell membrane. In terms of biological role, channel that opens in response to stretch forces in the membrane lipid bilayer. May participate in the regulation of osmotic pressure changes within the cell. The sequence is that of Large-conductance mechanosensitive channel from Mycobacterium leprae (strain Br4923).